The following is a 985-amino-acid chain: Probable oxidoreductase YjgC (985 aa).

The 2Fe-2S ferredoxin-type domain maps to 3–79; sequence GKKTITINGV…GDVIDTLSPD (77 aa). [2Fe-2S] cluster is bound by residues Cys37, Cys48, Cys51, and Cys63. The 4Fe-4S His(Cys)3-ligated-type domain maps to 79–119; it reads DVKKAQVIGMDKILYNHELYCTVCDYNNGGCEIHNTVKEMK. Residues His95, Cys99, Cys102, Cys109, Cys148, Cys151, Cys154, Cys158, Cys191, Cys194, Cys197, Cys201, Cys265, Cys268, Cys272, and Cys300 each coordinate [4Fe-4S] cluster. 4Fe-4S ferredoxin-type domains are found at residues 139–170 and 182–211; these read PFYR…LTID and NDVP…EKGM. The 4Fe-4S Mo/W bis-MGD-type domain maps to 258–314; that stretch reads IKKTKTVCTYCGVGCSFDVWTKGRDILKVEPQEEAPANGISTCVKGKFGWDFVNSEE.

It in the C-terminal section; belongs to the prokaryotic molybdopterin-containing oxidoreductase family. Requires [2Fe-2S] cluster as cofactor. [4Fe-4S] cluster serves as cofactor. The cofactor is Mo-bis(molybdopterin guanine dinucleotide).

The protein is Probable oxidoreductase YjgC (yjgC) of Bacillus subtilis (strain 168).